Here is a 351-residue protein sequence, read N- to C-terminus: Photosystem II D2 protein (351 aa).

A helical membrane pass occupies residues 39–59 (TAYLAAGGWMTGTTFVTSWYT). H116 lines the chlorophyll a pocket. A helical transmembrane segment spans residues 123–139 (GFCLRQFEIARLVGIRP). Pheophytin a is bound by residues Q128 and N141. The chain crosses the membrane as a helical span at residues 151 to 164 (VFVSVFLLYPLGQA). H196 lines the chlorophyll a pocket. The chain crosses the membrane as a helical span at residues 206-226 (GALLCAIHGATVENTLFEDGD). A plastoquinone contacts are provided by H213 and F260. H213 contacts Fe cation. Fe cation is bound at residue H267. The helical transmembrane segment at 277 to 293 (GLWTSAIGIVGLALNLR) threads the bilayer.

It belongs to the reaction center PufL/M/PsbA/D family. As to quaternary structure, PSII is composed of 1 copy each of membrane proteins PsbA, PsbB, PsbC, PsbD, PsbE, PsbF, PsbH, PsbI, PsbJ, PsbK, PsbL, PsbM, PsbT, PsbX, PsbY, PsbZ, Psb30/Ycf12, at least 3 peripheral proteins of the oxygen-evolving complex and a large number of cofactors. It forms dimeric complexes. The cofactor is The D1/D2 heterodimer binds P680, chlorophylls that are the primary electron donor of PSII, and subsequent electron acceptors. It shares a non-heme iron and each subunit binds pheophytin, quinone, additional chlorophylls, carotenoids and lipids. There is also a Cl(-1) ion associated with D1 and D2, which is required for oxygen evolution. The PSII complex binds additional chlorophylls, carotenoids and specific lipids..

It is found in the plastid. It localises to the chloroplast thylakoid membrane. The enzyme catalyses 2 a plastoquinone + 4 hnu + 2 H2O = 2 a plastoquinol + O2. Its function is as follows. Photosystem II (PSII) is a light-driven water:plastoquinone oxidoreductase that uses light energy to abstract electrons from H(2)O, generating O(2) and a proton gradient subsequently used for ATP formation. It consists of a core antenna complex that captures photons, and an electron transfer chain that converts photonic excitation into a charge separation. The D1/D2 (PsbA/PsbD) reaction center heterodimer binds P680, the primary electron donor of PSII as well as several subsequent electron acceptors. D2 is needed for assembly of a stable PSII complex. The sequence is that of Photosystem II D2 protein from Trieres chinensis (Marine centric diatom).